We begin with the raw amino-acid sequence, 251 residues long: MSDSNLDGVLVLIPARMASTRLPGKPLADICGLPMIVQVAMRAQEAAIGRVVVAVDDIRVFDAVSAAGFEVVMTSSDHQSGSDRIFEALQKVDPAGKAEFIVNVQGDLPTIDPETVRAALRPLENEAVDIGTLTTEIDNEEDKTAPHIVKVVGSPVSDTRLRGLYFTRATAPYGKGPLYHHIGLYAYRRAALERFVSLGPSTLERREALEQLRALEAGMRIDAEIVDTVPLGVDTPADLEKARRILSARTG.

It belongs to the KdsB family.

Its subcellular location is the cytoplasm. It catalyses the reaction 3-deoxy-alpha-D-manno-oct-2-ulosonate + CTP = CMP-3-deoxy-beta-D-manno-octulosonate + diphosphate. It participates in nucleotide-sugar biosynthesis; CMP-3-deoxy-D-manno-octulosonate biosynthesis; CMP-3-deoxy-D-manno-octulosonate from 3-deoxy-D-manno-octulosonate and CTP: step 1/1. It functions in the pathway bacterial outer membrane biogenesis; lipopolysaccharide biosynthesis. In terms of biological role, activates KDO (a required 8-carbon sugar) for incorporation into bacterial lipopolysaccharide in Gram-negative bacteria. This Rhizobium leguminosarum bv. trifolii (strain WSM2304) protein is 3-deoxy-manno-octulosonate cytidylyltransferase.